Here is a 154-residue protein sequence, read N- to C-terminus: Cyanate hydratase (154 aa).

Catalysis depends on residues Arg-100, Glu-103, and Ser-126.

Belongs to the cyanase family.

It catalyses the reaction cyanate + hydrogencarbonate + 3 H(+) = NH4(+) + 2 CO2. Its function is as follows. Catalyzes the reaction of cyanate with bicarbonate to produce ammonia and carbon dioxide. This chain is Cyanate hydratase, found in Aspergillus terreus (strain NIH 2624 / FGSC A1156).